The chain runs to 189 residues: Large ribosomal subunit protein uL5 (189 aa).

It belongs to the universal ribosomal protein uL5 family. As to quaternary structure, part of the 50S ribosomal subunit; part of the 5S rRNA/L5/L18/L25 subcomplex. Contacts the 5S rRNA and the P site tRNA. Forms a bridge to the 30S subunit in the 70S ribosome.

Functionally, this is one of the proteins that bind and probably mediate the attachment of the 5S RNA into the large ribosomal subunit, where it forms part of the central protuberance. In the 70S ribosome it contacts protein S13 of the 30S subunit (bridge B1b), connecting the 2 subunits; this bridge is implicated in subunit movement. Contacts the P site tRNA; the 5S rRNA and some of its associated proteins might help stabilize positioning of ribosome-bound tRNAs. The protein is Large ribosomal subunit protein uL5 of Salinispora tropica (strain ATCC BAA-916 / DSM 44818 / JCM 13857 / NBRC 105044 / CNB-440).